A 427-amino-acid chain; its full sequence is Serine--tRNA ligase (427 aa).

231–233 serves as a coordination point for L-serine; that stretch reads TAE. ATP is bound at residue 262 to 264; it reads RSE. Residue E285 coordinates L-serine. 349 to 352 contacts ATP; sequence EISS. S385 is a binding site for L-serine.

Belongs to the class-II aminoacyl-tRNA synthetase family. Type-1 seryl-tRNA synthetase subfamily. Homodimer. The tRNA molecule binds across the dimer.

It is found in the cytoplasm. The catalysed reaction is tRNA(Ser) + L-serine + ATP = L-seryl-tRNA(Ser) + AMP + diphosphate + H(+). The enzyme catalyses tRNA(Sec) + L-serine + ATP = L-seryl-tRNA(Sec) + AMP + diphosphate + H(+). Its pathway is aminoacyl-tRNA biosynthesis; selenocysteinyl-tRNA(Sec) biosynthesis; L-seryl-tRNA(Sec) from L-serine and tRNA(Sec): step 1/1. Its function is as follows. Catalyzes the attachment of serine to tRNA(Ser). Is also able to aminoacylate tRNA(Sec) with serine, to form the misacylated tRNA L-seryl-tRNA(Sec), which will be further converted into selenocysteinyl-tRNA(Sec). The polypeptide is Serine--tRNA ligase (Rhizobium rhizogenes (strain K84 / ATCC BAA-868) (Agrobacterium radiobacter)).